The following is a 133-amino-acid chain: MVVMDTLANALSAIYNAEIRAKKEVVVWPASKLTLNVLKVLQREGYIGEFEYIDDGRWGKIKIQLLGRINKIGVIKPRYPVKHRELAEFPEWLKRYLPAYNIGVIIVSTPYGVLSHKEAVEKQTGGVLLAYCY.

Belongs to the universal ribosomal protein uS8 family. Part of the 30S ribosomal subunit.

Its function is as follows. One of the primary rRNA binding proteins, it binds directly to 16S rRNA central domain where it helps coordinate assembly of the platform of the 30S subunit. The chain is Small ribosomal subunit protein uS8 from Desulfurococcus amylolyticus (strain DSM 18924 / JCM 16383 / VKM B-2413 / 1221n) (Desulfurococcus kamchatkensis).